Consider the following 292-residue polypeptide: 4-hydroxy-tetrahydrodipicolinate synthase (292 aa).

Threonine 45 is a binding site for pyruvate. Residue tyrosine 133 is the Proton donor/acceptor of the active site. Lysine 161 acts as the Schiff-base intermediate with substrate in catalysis. A pyruvate-binding site is contributed by isoleucine 203.

The protein belongs to the DapA family. Homotetramer; dimer of dimers.

It is found in the cytoplasm. The enzyme catalyses L-aspartate 4-semialdehyde + pyruvate = (2S,4S)-4-hydroxy-2,3,4,5-tetrahydrodipicolinate + H2O + H(+). Its pathway is amino-acid biosynthesis; L-lysine biosynthesis via DAP pathway; (S)-tetrahydrodipicolinate from L-aspartate: step 3/4. Functionally, catalyzes the condensation of (S)-aspartate-beta-semialdehyde [(S)-ASA] and pyruvate to 4-hydroxy-tetrahydrodipicolinate (HTPA). The sequence is that of 4-hydroxy-tetrahydrodipicolinate synthase from Cronobacter sakazakii (strain ATCC BAA-894) (Enterobacter sakazakii).